The sequence spans 580 residues: Glutamyl-tRNA(Gln) amidotransferase subunit B-2, chloroplastic/mitochondrial (580 aa).

Low complexity-rich tracts occupy residues 20 to 35 (RRDA…ATVS) and 42 to 59 (AVST…SAAV). The tract at residues 20–64 (RRDATAAASTSAATVSRGRRARAVSTTTTTSSSSSSSAAVDARDA) is disordered.

It belongs to the GatB/GatE family. GatB subfamily. As to quaternary structure, subunit of the heterotrimeric GatCAB amidotransferase (AdT) complex, composed of A, B and C subunits.

It localises to the mitochondrion. The protein localises to the plastid. Its subcellular location is the chloroplast. It carries out the reaction L-glutamyl-tRNA(Gln) + L-glutamine + ATP + H2O = L-glutaminyl-tRNA(Gln) + L-glutamate + ADP + phosphate + H(+). Its function is as follows. Allows the formation of correctly charged Gln-tRNA(Gln) through the transamidation of misacylated Glu-tRNA(Gln) in chloroplasts and mitochondria. The reaction takes place in the presence of glutamine and ATP through an activated gamma-phospho-Glu-tRNA(Gln). In Micromonas pusilla (strain CCMP1545) (Picoplanktonic green alga), this protein is Glutamyl-tRNA(Gln) amidotransferase subunit B-2, chloroplastic/mitochondrial.